The chain runs to 117 residues: Hemerythrin subunit beta (117 aa).

Residues His-24, His-53, Glu-57, His-72, His-76, His-105, and Asp-110 each contribute to the Fe cation site.

This sequence belongs to the hemerythrin family. As to quaternary structure, octamer composed of two types of chains: alpha and beta.

Hemerythrin is a respiratory protein in blood cells of certain marine worms. The oxygen-binding site in each chain contains two iron atoms. The polypeptide is Hemerythrin subunit beta (Lingula anatina (Brachiopod)).